A 98-amino-acid chain; its full sequence is NADH-ubiquinone oxidoreductase chain 4L (98 aa).

Transmembrane regions (helical) follow at residues 2-22, 26-46, and 59-79; these read TSAFLNLTMAFTLSLLGTFMF, LMSTLLCLEGMMLSLFVMTST, and IPITILVFAACEAAVGLALLV.

It belongs to the complex I subunit 4L family. In terms of assembly, core subunit of respiratory chain NADH dehydrogenase (Complex I) which is composed of 45 different subunits.

The protein localises to the mitochondrion inner membrane. The enzyme catalyses a ubiquinone + NADH + 5 H(+)(in) = a ubiquinol + NAD(+) + 4 H(+)(out). In terms of biological role, core subunit of the mitochondrial membrane respiratory chain NADH dehydrogenase (Complex I) which catalyzes electron transfer from NADH through the respiratory chain, using ubiquinone as an electron acceptor. Part of the enzyme membrane arm which is embedded in the lipid bilayer and involved in proton translocation. This chain is NADH-ubiquinone oxidoreductase chain 4L, found in Rattus norvegicus (Rat).